The following is a 682-amino-acid chain: Polycomb protein suz12-B (682 aa).

The segment at 326–355 (DPSDPSTAPVAKPLSTRNSDTSTTESRIST) is disordered. The segment covering 340-354 (STRNSDTSTTESRIS) has biased composition (polar residues). The segment at 408–431 (LHCPWCTLNCRKLYSLLKHLKLSH) adopts a C2H2-type zinc-finger fold. The tract at residues 523-599 (RLYFHSDSCM…NQMSQASMLF (77 aa)) is VEFS-box.

It belongs to the VEFS (VRN2-EMF2-FIS2-SU(Z)12) family. As to quaternary structure, component of the prc2/eed-ezh2 complex.

Its subcellular location is the nucleus. Polycomb group (PcG) protein. Component of the prc2/eed-ezh2 complex, which methylates 'Lys-9' and 'Lys-27' of histone H3, leading to transcriptional repression of the affected target gene. This Danio rerio (Zebrafish) protein is Polycomb protein suz12-B (suz12b).